Here is a 492-residue protein sequence, read N- to C-terminus: Phosphoenolpyruvate carboxylase (492 aa).

This sequence belongs to the PEPCase type 2 family. In terms of assembly, homotetramer. Requires Mg(2+) as cofactor.

The enzyme catalyses oxaloacetate + phosphate = phosphoenolpyruvate + hydrogencarbonate. Catalyzes the irreversible beta-carboxylation of phosphoenolpyruvate (PEP) to form oxaloacetate (OAA), a four-carbon dicarboxylic acid source for the tricarboxylic acid cycle. In Halobacterium salinarum (strain ATCC 29341 / DSM 671 / R1), this protein is Phosphoenolpyruvate carboxylase.